Consider the following 149-residue polypeptide: Transcriptional repressor NrdR (149 aa).

The segment at C3–C34 is a zinc-finger region. The 91-residue stretch at P49–Q139 folds into the ATP-cone domain.

This sequence belongs to the NrdR family. Requires Zn(2+) as cofactor.

Its function is as follows. Negatively regulates transcription of bacterial ribonucleotide reductase nrd genes and operons by binding to NrdR-boxes. This is Transcriptional repressor NrdR from Histophilus somni (strain 129Pt) (Haemophilus somnus).